The following is a 979-amino-acid chain: UPF0182 protein MRA_0066 (979 aa).

A run of 7 helical transmembrane segments spans residues 19 to 39, 63 to 83, 114 to 134, 174 to 194, 211 to 231, 260 to 280, and 288 to 308; these read LVTA…LVDI, LAIV…ALLL, LFGW…ASFD, WLFV…YLFG, VQLA…YWLD, KLVL…AIFL, and MAAA…PLLM. The interval 898-948 is disordered; sequence GTGRVATARGGDAASAPPPGAGGPAPPQAVPPPRTTQPPAAPPRGPDVPPA. The segment covering 913-946 has biased composition (pro residues); the sequence is APPPGAGGPAPPQAVPPPRTTQPPAAPPRGPDVP.

It belongs to the UPF0182 family.

The protein localises to the cell membrane. The polypeptide is UPF0182 protein MRA_0066 (Mycobacterium tuberculosis (strain ATCC 25177 / H37Ra)).